The primary structure comprises 407 residues: ATP phosphoribosyltransferase regulatory subunit (407 aa).

The protein belongs to the class-II aminoacyl-tRNA synthetase family. HisZ subfamily. In terms of assembly, heteromultimer composed of HisG and HisZ subunits.

Its subcellular location is the cytoplasm. Its pathway is amino-acid biosynthesis; L-histidine biosynthesis; L-histidine from 5-phospho-alpha-D-ribose 1-diphosphate: step 1/9. Functionally, required for the first step of histidine biosynthesis. May allow the feedback regulation of ATP phosphoribosyltransferase activity by histidine. The chain is ATP phosphoribosyltransferase regulatory subunit from Rippkaea orientalis (strain PCC 8801 / RF-1) (Cyanothece sp. (strain PCC 8801)).